Here is a 375-residue protein sequence, read N- to C-terminus: o-succinylbenzoate synthase (375 aa).

The active-site Proton donor is the K166. Mg(2+)-binding residues include D191, E216, and D241. K265 functions as the Proton acceptor in the catalytic mechanism.

This sequence belongs to the mandelate racemase/muconate lactonizing enzyme family. MenC type 2 subfamily. Homotetramer. Requires a divalent metal cation as cofactor.

It catalyses the reaction (1R,6R)-6-hydroxy-2-succinyl-cyclohexa-2,4-diene-1-carboxylate = 2-succinylbenzoate + H2O. It carries out the reaction N-acetyl-D-methionine = N-acetyl-L-methionine. The enzyme catalyses N-acetyl-D-phenylalanine = N-acetyl-L-phenylalanine. Its pathway is quinol/quinone metabolism; 1,4-dihydroxy-2-naphthoate biosynthesis; 1,4-dihydroxy-2-naphthoate from chorismate: step 4/7. It participates in quinol/quinone metabolism; menaquinone biosynthesis. Its function is as follows. Converts 2-succinyl-6-hydroxy-2,4-cyclohexadiene-1-carboxylate (SHCHC) to 2-succinylbenzoate (OSB). Also acts as a N-succinylamino acid racemase (NSAR) that catalyzes the racemization of various N-succinylamino acids, including N-succinyl-alanine and N-succinyl-phenylalanine. Can catalyze the racemization of a broad range of N-acylamino acids, including N-acetyl-methionine, N-acetyl-phenylalanine, N-carbamoyl-methionine, N-formyl-D-methionine, N-formyl-D-norleucine and N-carbamoyl-D-norleucine. May be a bifunctional enzyme involved in menaquinone biosynthesis and in an irreversible pathway for the conversion of D- to L-amino acids, thereby facilitating the survival and/or growth of the organism. This chain is o-succinylbenzoate synthase, found in Geobacillus kaustophilus.